Reading from the N-terminus, the 222-residue chain is Endonuclease V (222 aa).

Mg(2+) contacts are provided by Asp-43 and Asp-109.

Belongs to the endonuclease V family. Requires Mg(2+) as cofactor.

The protein localises to the cytoplasm. It catalyses the reaction Endonucleolytic cleavage at apurinic or apyrimidinic sites to products with a 5'-phosphate.. DNA repair enzyme involved in the repair of deaminated bases. Selectively cleaves double-stranded DNA at the second phosphodiester bond 3' to a deoxyinosine leaving behind the intact lesion on the nicked DNA. This Roseiflexus sp. (strain RS-1) protein is Endonuclease V.